The sequence spans 408 residues: Serine/threonine transporter SstT (408 aa).

Transmembrane regions (helical) follow at residues 11-31 (LANG…VILA), 43-63 (FLGS…VFIL), 81-101 (PIVV…VVLS), 141-161 (ALMT…GLAL), 192-212 (IGIF…AIAG), 216-236 (LLAV…PLIV), 298-318 (MGGA…TLGI), 330-350 (VVAA…LLLI), and 357-377 (FGIS…IGVI).

This sequence belongs to the dicarboxylate/amino acid:cation symporter (DAACS) (TC 2.A.23) family.

It is found in the cell inner membrane. The enzyme catalyses L-serine(in) + Na(+)(in) = L-serine(out) + Na(+)(out). It carries out the reaction L-threonine(in) + Na(+)(in) = L-threonine(out) + Na(+)(out). Its function is as follows. Involved in the import of serine and threonine into the cell, with the concomitant import of sodium (symport system). In Shewanella sp. (strain W3-18-1), this protein is Serine/threonine transporter SstT.